We begin with the raw amino-acid sequence, 105 residues long: Large ribosomal subunit protein uL24 (105 aa).

It belongs to the universal ribosomal protein uL24 family. As to quaternary structure, part of the 50S ribosomal subunit.

Its function is as follows. One of two assembly initiator proteins, it binds directly to the 5'-end of the 23S rRNA, where it nucleates assembly of the 50S subunit. Functionally, one of the proteins that surrounds the polypeptide exit tunnel on the outside of the subunit. The chain is Large ribosomal subunit protein uL24 from Clostridium kluyveri (strain ATCC 8527 / DSM 555 / NBRC 12016 / NCIMB 10680 / K1).